Consider the following 431-residue polypeptide: Glutamate-1-semialdehyde 2,1-aminomutase (431 aa).

Lys-267 carries the N6-(pyridoxal phosphate)lysine modification.

Belongs to the class-III pyridoxal-phosphate-dependent aminotransferase family. HemL subfamily. In terms of assembly, homodimer. Requires pyridoxal 5'-phosphate as cofactor.

Its subcellular location is the cytoplasm. It catalyses the reaction (S)-4-amino-5-oxopentanoate = 5-aminolevulinate. It functions in the pathway porphyrin-containing compound metabolism; protoporphyrin-IX biosynthesis; 5-aminolevulinate from L-glutamyl-tRNA(Glu): step 2/2. The polypeptide is Glutamate-1-semialdehyde 2,1-aminomutase (Myxococcus xanthus (strain DK1622)).